Reading from the N-terminus, the 1710-residue chain is Centrosomal protein of 152 kDa (1710 aa).

3 disordered regions span residues 1 to 27 (MSLD…YERE), 39 to 79 (HDML…NEQM), and 108 to 139 (NRSK…SKCE). An interaction with PLK4 region spans residues 1-60 (MSLDFGSVALPVQNEDEEYDEEDYEREKELQQLLTDLPHDMLDDDLSSPELQYSDCSEDG). A compositionally biased stretch (acidic residues) spans 14–24 (NEDEEYDEEDY). Residues 108-123 (NRSKTEDRHPVYHPEE) are compositionally biased toward basic and acidic residues. Residues 234–490 (ENMQIIQLQV…ISLYESAAKL (257 aa)) are a coiled coil. Over residues 587–604 (DEKSIEVETKTDTSEKPK) the composition is skewed to basic and acidic residues. Residues 587–611 (DEKSIEVETKTDTSEKPKNQLWPES) are disordered. 3 coiled-coil regions span residues 615–664 (DVVR…QDFD), 700–772 (EKQQ…LEKE), and 902–993 (AVSE…INEV). Residues 1120 to 1142 (ELSKDSASQGTGQGDPGPAAGHH) are disordered. Residues 1170 to 1241 (HCFQELEKAK…LEELQTLCKT (72 aa)) adopt a coiled-coil conformation. Thr-1241 carries the post-translational modification Phosphothreonine.

It belongs to the CEP152 family. In terms of assembly, interacts (via N-terminus) with PLK4; the interaction is mutally exclusive with a PLK4:CEP192 interaction. Interacts (via C-terminus) with CPAP (via-N-terminus). Interacts with CINP. Interacts with CDK5RAP2, WDR62, CEP63 and CEP131. CEP63, CDK5RAP2, CEP152, WDR62 are proposed to form a stepwise assembled complex at the centrosome forming a ring near parental centrioles. Interacts with DEUP1; this interaction recruits CEP152 to the deuterosome. The interactions with CEP63 and DEUP1 are mutually exclusive. Interacts with CCDC66.

It localises to the cytoplasm. It is found in the cytoskeleton. The protein resides in the microtubule organizing center. The protein localises to the centrosome. Its subcellular location is the centriole. Its function is as follows. Necessary for centrosome duplication; the function also seems to involve CEP63, CDK5RAP2 and WDR62 through a stepwise assembled complex at the centrosome that recruits CDK2 required for centriole duplication. Acts as a molecular scaffold facilitating the interaction of PLK4 and CPAP, 2 molecules involved in centriole formation. Proposed to snatch PLK4 away from PLK4:CEP92 complexes in early G1 daughter centriole and to reposition PLK4 at the outer boundary of a newly forming CEP152 ring structure. Also plays a key role in deuterosome-mediated centriole amplification in multiciliated that can generate more than 100 centrioles. Overexpression of CEP152 can drive amplification of centrioles. This chain is Centrosomal protein of 152 kDa, found in Homo sapiens (Human).